Here is a 60-residue protein sequence, read N- to C-terminus: Large ribosomal subunit protein bL32 (60 aa).

The segment covering 1 to 16 (MAVPKRKTSPSKRGMR) has biased composition (basic residues). Residues 1 to 60 (MAVPKRKTSPSKRGMRRSADALKAPTYVEDKNSGEMRRPHHIDLKTGMYRGRQVLTPKES) form a disordered region. A compositionally biased stretch (basic and acidic residues) spans 28–44 (VEDKNSGEMRRPHHIDL).

This sequence belongs to the bacterial ribosomal protein bL32 family.

The chain is Large ribosomal subunit protein bL32 from Mesorhizobium japonicum (strain LMG 29417 / CECT 9101 / MAFF 303099) (Mesorhizobium loti (strain MAFF 303099)).